The sequence spans 135 residues: Putative large ribosomal subunit protein eL32' (135 aa).

This sequence belongs to the eukaryotic ribosomal protein eL32 family.

The polypeptide is Putative large ribosomal subunit protein eL32' (Rpl32-ps) (Mus musculus (Mouse)).